A 485-amino-acid polypeptide reads, in one-letter code: MDLTKLTAHELKDILSNKEVKAEEITRAFLDRINLVDNKLGAYLYVSEEEAIKKAKEIDVKIEKNEELKALSGIPVGIKDNINVKGMQNTCASKILQGYTSPYDAHVTEKIKKEEGIILGKLNMDEFAMGSSTENSAFKLAKNPWDLERVPGGSSGGSAVAVAGCEATLSLGTDTGGSVRQPASFCGIVGLKPTYGRISRSGVVAFGSTLDQVGPMGKDVEDCALLTSAIAGLDKKDFTTADKEVPDYKKSLTKDIKGKKIGIPKEFFGEGLDEKVRKSVEEAIKVLEENGAEVKPCSLPLMDYALSAYYIISSAEASSNLARFDGIRYGHRSKNFKDAQDIYLKSRSEGFGDEVKRRIMLGTYVLSAGYYDAYYKKALKVRKLIKDDFQRVFKDFDAIVSPTSPTTAFKVGEKKDDVMSMYLSDIYTVPISVAGVPAISLPCGMIDGLPVGLQIISDYFKEDVLFNLAYNYEQSVDFHKMRADF.

Catalysis depends on charge relay system residues Lys-79 and Ser-154. Residue Ser-178 is the Acyl-ester intermediate of the active site.

Belongs to the amidase family. GatA subfamily. As to quaternary structure, heterotrimer of A, B and C subunits.

The enzyme catalyses L-glutamyl-tRNA(Gln) + L-glutamine + ATP + H2O = L-glutaminyl-tRNA(Gln) + L-glutamate + ADP + phosphate + H(+). Its function is as follows. Allows the formation of correctly charged Gln-tRNA(Gln) through the transamidation of misacylated Glu-tRNA(Gln) in organisms which lack glutaminyl-tRNA synthetase. The reaction takes place in the presence of glutamine and ATP through an activated gamma-phospho-Glu-tRNA(Gln). This chain is Glutamyl-tRNA(Gln) amidotransferase subunit A, found in Clostridium botulinum (strain Kyoto / Type A2).